The following is an 801-amino-acid chain: Probable inorganic carbon transporter subunit DabA (801 aa).

Zn(2+) is bound by residues cysteine 332, aspartate 334, histidine 500, and cysteine 515.

It belongs to the inorganic carbon transporter (TC 9.A.2) DabA family. Forms a complex with DabB. Zn(2+) serves as cofactor.

Its subcellular location is the cell inner membrane. In terms of biological role, part of an energy-coupled inorganic carbon pump. The polypeptide is Probable inorganic carbon transporter subunit DabA (Marinobacter nauticus (strain ATCC 700491 / DSM 11845 / VT8) (Marinobacter aquaeolei)).